The following is a 124-amino-acid chain: Small ribosomal subunit protein bS6 (124 aa).

The segment at 96–124 (ETAPSPMMKEVQREEARKAAQTTTEGQAA) is disordered. The span at 115–124 (AQTTTEGQAA) shows a compositional bias: polar residues.

Belongs to the bacterial ribosomal protein bS6 family.

Binds together with bS18 to 16S ribosomal RNA. The sequence is that of Small ribosomal subunit protein bS6 from Cupriavidus pinatubonensis (strain JMP 134 / LMG 1197) (Cupriavidus necator (strain JMP 134)).